A 1043-amino-acid polypeptide reads, in one-letter code: Liprin-alpha-4 (1043 aa).

Coiled coils occupy residues 24 to 332 (EKVR…GRGG) and 426 to 470 (ILDA…RVTS). The disordered stretch occupies residues 498-617 (SASPPLSGRS…AKRKGIKSSI (120 aa)). Residue Ser500 is modified to Phosphoserine. Polar residues predominate over residues 505-516 (GRSTPKLTSRSA). Position 541 is a phosphoserine (Ser541). Over residues 544–555 (SREENREDKATI) the composition is skewed to basic and acidic residues. Residues 590 to 602 (QDSNPSSSNSSQD) show a composition bias toward low complexity. 3 consecutive SAM domains span residues 688–754 (WDGP…MVSL), 803–867 (NHEW…LKRL), and 891–960 (WTND…LLAL). A coiled-coil region spans residues 864-890 (LKRLNYDRKELEKRREESQHEIKDVLV).

It belongs to the liprin family. Liprin-alpha subfamily. Forms homodimers and heterodimers with liprins-alpha and liprins-beta. Interacts with the second PTPase domain of PTPRD, PTPRF and PTPRS. Interacts with RIMS1 and RIMS2. Interacts with GIT1 and GIT2. Interacts with GRIP1. Interacts with KIF1A.

The protein resides in the cytoplasm. The protein localises to the cell surface. In terms of biological role, may regulate the disassembly of focal adhesions. May localize receptor-like tyrosine phosphatases type 2A at specific sites on the plasma membrane, possibly regulating their interaction with the extracellular environment and their association with substrates. The polypeptide is Liprin-alpha-4 (Ppfia4) (Rattus norvegicus (Rat)).